Consider the following 530-residue polypeptide: Ankyrin repeat domain-containing protein 53 (530 aa).

A compositionally biased stretch (low complexity) spans 1-15 (MASAGSTARRAGSGS). The interval 1–99 (MASAGSTARR…PSPSKESDQT (99 aa)) is disordered. The span at 32-41 (PSGSMQQANK) shows a compositional bias: polar residues. 3 ANK repeats span residues 139 to 169 (KGFT…PVDL), 173 to 206 (NSQT…DLNA), and 210 to 239 (NGST…NVHA). Disordered stretches follow at residues 323–360 (GHSL…VDAR) and 383–402 (PTMW…QISH). Polar residues-rich tracts occupy residues 326–341 (LVSN…LSKT) and 386–402 (WNVS…QISH).

In terms of assembly, interacts with PSRC1; recruited by PSRC1 to the spindle during mitosis. Post-translationally, phosphorylated during mitosis.

The protein resides in the cytoplasm. It is found in the cytoskeleton. It localises to the spindle. Its subcellular location is the spindle pole. Functionally, required for normal progression through mitosis. Involved in chromosome alignment and cytokinesis via regulation of microtubules polymerization. This Homo sapiens (Human) protein is Ankyrin repeat domain-containing protein 53 (ANKRD53).